A 561-amino-acid chain; its full sequence is Asparagine synthetase [glutamine-hydrolyzing] (561 aa).

Residue Cys2 is the For GATase activity of the active site. Positions 2 to 191 constitute a Glutamine amidotransferase type-2 domain; that stretch reads CGIWALFGSD…PGHYEVLDLK (190 aa). Residues 49-53, 75-77, and Asp97 contribute to the L-glutamine site; these read RLAVV and NGE. Residues 213 to 536 enclose the Asparagine synthetase domain; sequence HAIYDSVEKL…PGRADWLTHY (324 aa). Residues Leu256, Ile288, and 363-364 contribute to the ATP site; that span reads SG. Position 385 is an N6-acetyllysine (Lys385). At Thr545 the chain carries Phosphothreonine. At Ser557 the chain carries Phosphoserine.

The catalysed reaction is L-aspartate + L-glutamine + ATP + H2O = L-asparagine + L-glutamate + AMP + diphosphate + H(+). It participates in amino-acid biosynthesis; L-asparagine biosynthesis; L-asparagine from L-aspartate (L-Gln route): step 1/1. The chain is Asparagine synthetase [glutamine-hydrolyzing] (Asns) from Rattus norvegicus (Rat).